The following is a 351-amino-acid chain: 3-ketosteroid-9-alpha-monooxygenase, ferredoxin reductase component (351 aa).

Residues 10–116 form the FAD-binding FR-type domain; that stretch reads SRSVILTVSA…LPPAGVFTPK (107 aa). A 2Fe-2S ferredoxin-type domain is found at 264-351; that stretch reads ATVEVELDGE…PVTDHLKIEF (88 aa). The [2Fe-2S] cluster site is built by Cys300, Cys305, Cys308, and Cys338.

The two-component system 3-ketosteroid-9-alpha-monooxygenase is composed of an oxygenase component KshA and a reductase component KshB. The cofactor is FAD. [2Fe-2S] cluster is required as a cofactor.

It catalyses the reaction androsta-1,4-diene-3,17-dione + 2 reduced [2Fe-2S]-[ferredoxin] + O2 + 2 H(+) = 9alpha-hydroxyandrosta-1,4-diene-3,17-dione + 2 oxidized [2Fe-2S]-[ferredoxin] + H2O. Its pathway is steroid metabolism; cholesterol degradation. With respect to regulation, KSH activity is completely inhibited by zinc ions. KshB is specifically inhibited by Cu(2+) ions. In terms of biological role, probably involved in the degradation of cholesterol. In vitro, catalyzes the introduction of a 9alpha-hydroxyl moiety into the ring B of 3-ketosteroid substrates such as 1,4-androstadiene-3,17-dione (ADD), 4-androstene-3,17-dione (AD), 4-androstene-17beta-ol-3-one (testosterone), 4-pregnene-3,20-dione (progesterone), 19-nor-4-androstene-3,17-dione (nordion), 1-(5alpha)-androstene-3,17-dione, 5alpha-androstane-3,17-dione and 5beta-androstane-3,17-dione. KSH has the highest activity with 3-keto-Delta4 steroid substrates. The protein is 3-ketosteroid-9-alpha-monooxygenase, ferredoxin reductase component of Rhodococcus rhodochrous.